The following is a 380-amino-acid chain: Cytochrome b (380 aa).

Helical transmembrane passes span 34 to 54 (FGSL…LLAT), 78 to 99 (WLIR…YLHI), 114 to 134 (WNTG…GYVL), and 179 to 199 (FFAL…IHLT). 2 residues coordinate heme b: H84 and H98. Positions 183 and 197 each coordinate heme b. H202 is an a ubiquinone binding site. 4 helical membrane passes run 227 to 247 (LKDI…ALFS), 289 to 309 (LGGV…PLLH), 321 to 341 (LSQL…WVGS), and 348 to 368 (FIII…ILFP).

The protein belongs to the cytochrome b family. As to quaternary structure, the cytochrome bc1 complex contains 11 subunits: 3 respiratory subunits (MT-CYB, CYC1 and UQCRFS1), 2 core proteins (UQCRC1 and UQCRC2) and 6 low-molecular weight proteins (UQCRH/QCR6, UQCRB/QCR7, UQCRQ/QCR8, UQCR10/QCR9, UQCR11/QCR10 and a cleavage product of UQCRFS1). This cytochrome bc1 complex then forms a dimer. Heme b is required as a cofactor.

Its subcellular location is the mitochondrion inner membrane. In terms of biological role, component of the ubiquinol-cytochrome c reductase complex (complex III or cytochrome b-c1 complex) that is part of the mitochondrial respiratory chain. The b-c1 complex mediates electron transfer from ubiquinol to cytochrome c. Contributes to the generation of a proton gradient across the mitochondrial membrane that is then used for ATP synthesis. This chain is Cytochrome b (MT-CYB), found in Ciconia ciconia (White stork).